Reading from the N-terminus, the 421-residue chain is 3-isopropylmalate dehydratase large subunit (421 aa).

[4Fe-4S] cluster is bound by residues C302, C362, and C365.

It belongs to the aconitase/IPM isomerase family. LeuC type 2 subfamily. As to quaternary structure, heterodimer of LeuC and LeuD. [4Fe-4S] cluster is required as a cofactor.

It carries out the reaction (2R,3S)-3-isopropylmalate = (2S)-2-isopropylmalate. Its pathway is amino-acid biosynthesis; L-leucine biosynthesis; L-leucine from 3-methyl-2-oxobutanoate: step 2/4. In terms of biological role, catalyzes the isomerization between 2-isopropylmalate and 3-isopropylmalate, via the formation of 2-isopropylmaleate. The protein is 3-isopropylmalate dehydratase large subunit of Nitratiruptor sp. (strain SB155-2).